The following is a 642-amino-acid chain: Dihydrolipoyllysine-residue acetyltransferase component of pyruvate dehydrogenase complex, mitochondrial (642 aa).

The N-terminal 85 residues, 1-85, are a transit peptide targeting the mitochondrion; that stretch reads MWRVCARRAR…LLGSPSRRSY (85 aa). Residues 80-99 are disordered; sequence PSRRSYSLPPHQKVPLPSLS. 2 consecutive Lipoyl-binding domains span residues 90-166 and 217-293; these read HQKV…CITV and HMQI…CIIV. Serine 99 bears the Phosphoserine mark. Residues lysine 131 and lysine 258 each carry the N6-lipoyllysine modification. Positions 313–346 are disordered; it reads LKPQAAPPAPPPVAAVPPTPQPVAPTPSAAPAGP. Residues 317-337 show a composition bias toward pro residues; the sequence is AAPPAPPPVAAVPPTPQPVAP. One can recognise a Peripheral subunit-binding (PSBD) domain in the interval 351-388; it reads FVSPLAKKLAAEKGIDLTQVKGTGPEGRIIKKDIDSFV. Arginine 456 is a binding site for CoA. Lysine 461 is subject to N6-acetyllysine. Lysine 468 carries the post-translational modification N6-succinyllysine. A CoA-binding site is contributed by serine 470. Residue lysine 542 is modified to N6-succinyllysine. Serine 561, asparagine 562, and glycine 586 together coordinate CoA. Residues histidine 615 and aspartate 619 contribute to the active site.

It belongs to the 2-oxoacid dehydrogenase family. In terms of assembly, part of the pyruvate dehydrogenase complex (PDHc) that is a multi-enzyme complex composed of multiple copies of three enzymes, pyruvate dehydrogenase (subunits PDH1A and PDHB, E1 component), dihydrolipoamide acetyltransferase (DLAT, E2 component), and dihydrolipoamide dehydrogenase (DLD, E3 component) to which is added an additional protein the E3-binding protein (PDHX, E3BP). In terms of structural architecture, the E2 and E3BP components assemble into a 60meric central core with icosahedral symmetry. The central core is decorated with E1 and E3 proteins. Currently, two alternative models for the E2:E3BP stoichiometry are considered as being either 48:12 (E2(48)-E3BP(12)) or 40:20 (E2(40)-E3BP(20)). Interacts with PDK2 and PDK3. Interacts with SIRT4. Interacts with PDHB. (R)-lipoate serves as cofactor. In terms of processing, delipoylated at Lys-131 and Lys-258 by SIRT4, delipoylation decreases the PHD complex activity.

It localises to the mitochondrion matrix. It carries out the reaction N(6)-[(R)-dihydrolipoyl]-L-lysyl-[protein] + acetyl-CoA = N(6)-[(R)-S(8)-acetyldihydrolipoyl]-L-lysyl-[protein] + CoA. In terms of biological role, as part of the pyruvate dehydrogenase complex, catalyzes the transfers of an acetyl group to a lipoic acid moiety. The pyruvate dehydrogenase complex, catalyzes the overall conversion of pyruvate to acetyl-CoA and CO(2), and thereby links cytoplasmic glycolysis and the mitochondrial tricarboxylic acid (TCA) cycle. The chain is Dihydrolipoyllysine-residue acetyltransferase component of pyruvate dehydrogenase complex, mitochondrial from Mus musculus (Mouse).